Here is a 745-residue protein sequence, read N- to C-terminus: AMP deaminase 1 (745 aa).

Thr79 carries the post-translational modification Phosphothreonine. Ser83 is modified (phosphoserine). Residue Tyr214 is modified to Phosphotyrosine. Zn(2+)-binding residues include His301 and His303. Substrate contacts are provided by residues His303 and 372–377 (KFNDKY). The residue at position 439 (Ser439) is a Phosphoserine. A Zn(2+)-binding site is contributed by His570. Glu573 contributes to the substrate binding site. His592 acts as the Proton acceptor in catalysis. Position 647 (Asp647) interacts with Zn(2+). Position 648-651 (648-651 (DPMQ)) interacts with substrate.

Belongs to the metallo-dependent hydrolases superfamily. Adenosine and AMP deaminases family. In terms of assembly, homotetramer. Zn(2+) serves as cofactor.

It carries out the reaction AMP + H2O + H(+) = IMP + NH4(+). It participates in purine metabolism; IMP biosynthesis via salvage pathway; IMP from AMP: step 1/1. AMP deaminase plays a critical role in energy metabolism. The sequence is that of AMP deaminase 1 from Mus musculus (Mouse).